Here is a 224-residue protein sequence, read N- to C-terminus: Probable septum site-determining protein MinC (224 aa).

This sequence belongs to the MinC family. In terms of assembly, interacts with MinD and FtsZ.

Functionally, cell division inhibitor that blocks the formation of polar Z ring septums. Rapidly oscillates between the poles of the cell to destabilize FtsZ filaments that have formed before they mature into polar Z rings. Prevents FtsZ polymerization. The chain is Probable septum site-determining protein MinC from Shewanella amazonensis (strain ATCC BAA-1098 / SB2B).